Reading from the N-terminus, the 329-residue chain is Diaminopimelate epimerase (329 aa).

Substrate is bound by residues N14 and N73. C82 serves as the catalytic Proton donor. Substrate-binding positions include 83-84 (GN), N170, N206, and 224-225 (ER). Residue C233 is the Proton acceptor of the active site. 234-235 (GT) contacts substrate.

This sequence belongs to the diaminopimelate epimerase family. As to quaternary structure, homodimer.

It localises to the cytoplasm. The enzyme catalyses (2S,6S)-2,6-diaminopimelate = meso-2,6-diaminopimelate. It functions in the pathway amino-acid biosynthesis; L-lysine biosynthesis via DAP pathway; DL-2,6-diaminopimelate from LL-2,6-diaminopimelate: step 1/1. Catalyzes the stereoinversion of LL-2,6-diaminopimelate (L,L-DAP) to meso-diaminopimelate (meso-DAP), a precursor of L-lysine and an essential component of the bacterial peptidoglycan. The protein is Diaminopimelate epimerase of Listeria monocytogenes serovar 1/2a (strain ATCC BAA-679 / EGD-e).